Here is a 54-residue protein sequence, read N- to C-terminus: Anti-adapter protein SpxO (54 aa).

As to quaternary structure, interacts with SpxH.

Inhibitor of Spx proteolytic control. Acts by interacting with SpxH/YjbH, which disrupts interaction between SpxH and Spx, and inhibits SpxH-enhanced proteolysis of Spx by ClpXP. Required for the stabilization of Spx and activation of Spx-regulated genes in response to cell wall stress. The polypeptide is Anti-adapter protein SpxO (Bacillus subtilis (strain 168)).